Consider the following 448-residue polypeptide: UDP-N-acetylmuramoylalanine--D-glutamate ligase (448 aa).

Residue 112 to 118 participates in ATP binding; the sequence is GSNAKST.

It belongs to the MurCDEF family.

The protein resides in the cytoplasm. It catalyses the reaction UDP-N-acetyl-alpha-D-muramoyl-L-alanine + D-glutamate + ATP = UDP-N-acetyl-alpha-D-muramoyl-L-alanyl-D-glutamate + ADP + phosphate + H(+). It functions in the pathway cell wall biogenesis; peptidoglycan biosynthesis. Cell wall formation. Catalyzes the addition of glutamate to the nucleotide precursor UDP-N-acetylmuramoyl-L-alanine (UMA). The chain is UDP-N-acetylmuramoylalanine--D-glutamate ligase from Acinetobacter baumannii (strain ACICU).